Consider the following 257-residue polypeptide: Hydroxyacylglutathione hydrolase (257 aa).

7 residues coordinate Zn(2+): histidine 54, histidine 56, aspartate 58, histidine 59, histidine 113, aspartate 137, and histidine 175.

Belongs to the metallo-beta-lactamase superfamily. Glyoxalase II family. In terms of assembly, monomer. The cofactor is Zn(2+).

The enzyme catalyses an S-(2-hydroxyacyl)glutathione + H2O = a 2-hydroxy carboxylate + glutathione + H(+). The protein operates within secondary metabolite metabolism; methylglyoxal degradation; (R)-lactate from methylglyoxal: step 2/2. Functionally, thiolesterase that catalyzes the hydrolysis of S-D-lactoyl-glutathione to form glutathione and D-lactic acid. This Crocosphaera subtropica (strain ATCC 51142 / BH68) (Cyanothece sp. (strain ATCC 51142)) protein is Hydroxyacylglutathione hydrolase.